Consider the following 466-residue polypeptide: Cysteine--tRNA ligase (466 aa).

Cys28 provides a ligand contact to Zn(2+). Residues Pro30–Asn40 carry the 'HIGH' region motif. Positions 208, 233, and 237 each coordinate Zn(2+). A 'KMSKS' region motif is present at residues Lys265–Ser269. Lys268 provides a ligand contact to ATP.

This sequence belongs to the class-I aminoacyl-tRNA synthetase family. Monomer. Zn(2+) serves as cofactor.

The protein localises to the cytoplasm. It catalyses the reaction tRNA(Cys) + L-cysteine + ATP = L-cysteinyl-tRNA(Cys) + AMP + diphosphate. This chain is Cysteine--tRNA ligase, found in Staphylococcus haemolyticus (strain JCSC1435).